Reading from the N-terminus, the 256-residue chain is Acetyl-coenzyme A carboxylase carboxyl transferase subunit alpha (256 aa).

The CoA carboxyltransferase C-terminal domain occupies 1–236 (MSDVARILKE…KTAIVDELAE (236 aa)).

It belongs to the AccA family. As to quaternary structure, acetyl-CoA carboxylase is a heterohexamer composed of biotin carboxyl carrier protein (AccB), biotin carboxylase (AccC) and two subunits each of ACCase subunit alpha (AccA) and ACCase subunit beta (AccD).

It is found in the cytoplasm. The catalysed reaction is N(6)-carboxybiotinyl-L-lysyl-[protein] + acetyl-CoA = N(6)-biotinyl-L-lysyl-[protein] + malonyl-CoA. Its pathway is lipid metabolism; malonyl-CoA biosynthesis; malonyl-CoA from acetyl-CoA: step 1/1. Functionally, component of the acetyl coenzyme A carboxylase (ACC) complex. First, biotin carboxylase catalyzes the carboxylation of biotin on its carrier protein (BCCP) and then the CO(2) group is transferred by the carboxyltransferase to acetyl-CoA to form malonyl-CoA. In Streptococcus thermophilus (strain ATCC BAA-250 / LMG 18311), this protein is Acetyl-coenzyme A carboxylase carboxyl transferase subunit alpha.